A 30-amino-acid polypeptide reads, in one-letter code: Dermonecrotic toxin LlSicTox-alphaIII-1 (30 aa).

The active site involves His12.

This sequence belongs to the arthropod phospholipase D family. Class I subfamily. Requires Mg(2+) as cofactor. In terms of processing, contains 1 disulfide bond. In terms of tissue distribution, expressed by the venom gland.

The protein localises to the secreted. The catalysed reaction is an N-(acyl)-sphingosylphosphocholine = an N-(acyl)-sphingosyl-1,3-cyclic phosphate + choline. It carries out the reaction an N-(acyl)-sphingosylphosphoethanolamine = an N-(acyl)-sphingosyl-1,3-cyclic phosphate + ethanolamine. The enzyme catalyses a 1-acyl-sn-glycero-3-phosphocholine = a 1-acyl-sn-glycero-2,3-cyclic phosphate + choline. It catalyses the reaction a 1-acyl-sn-glycero-3-phosphoethanolamine = a 1-acyl-sn-glycero-2,3-cyclic phosphate + ethanolamine. Its function is as follows. Dermonecrotic toxins cleave the phosphodiester linkage between the phosphate and headgroup of certain phospholipids (sphingolipid and lysolipid substrates), forming an alcohol (often choline) and a cyclic phosphate. This toxin acts on sphingomyelin (SM). It may also act on ceramide phosphoethanolamine (CPE), lysophosphatidylcholine (LPC) and lysophosphatidylethanolamine (LPE), but not on lysophosphatidylserine (LPS), and lysophosphatidylglycerol (LPG). It acts by transphosphatidylation, releasing exclusively cyclic phosphate products as second products. In vivo, intradermal injection induces dermonecrosis. Induces hemolysis, increased vascular permeability, edema, inflammatory response, and platelet aggregation. The protein is Dermonecrotic toxin LlSicTox-alphaIII-1 of Loxosceles laeta (South American recluse spider).